The sequence spans 435 residues: Enolase (435 aa).

A (2R)-2-phosphoglycerate-binding site is contributed by glutamine 167. The active-site Proton donor is glutamate 209. Positions 246, 291, and 318 each coordinate Mg(2+). 4 residues coordinate (2R)-2-phosphoglycerate: lysine 343, arginine 372, serine 373, and lysine 394. The Proton acceptor role is filled by lysine 343.

It belongs to the enolase family. In terms of assembly, component of the RNA degradosome, a multiprotein complex involved in RNA processing and mRNA degradation. The cofactor is Mg(2+).

Its subcellular location is the cytoplasm. The protein resides in the secreted. It is found in the cell surface. It catalyses the reaction (2R)-2-phosphoglycerate = phosphoenolpyruvate + H2O. Its pathway is carbohydrate degradation; glycolysis; pyruvate from D-glyceraldehyde 3-phosphate: step 4/5. Catalyzes the reversible conversion of 2-phosphoglycerate (2-PG) into phosphoenolpyruvate (PEP). It is essential for the degradation of carbohydrates via glycolysis. The polypeptide is Enolase (Psychromonas ingrahamii (strain DSM 17664 / CCUG 51855 / 37)).